An 808-amino-acid chain; its full sequence is Phenylalanine--tRNA ligase beta subunit (808 aa).

Residues 40-149 (RPELDFVKIV…DQAEVGKTIR (110 aa)) form the tRNA-binding domain. In terms of domain architecture, B5 spans 407 to 484 (HKEVRIHTDI…RTKGYDTIQV (78 aa)). 4 residues coordinate Mg(2+): D462, D468, E471, and E472. The FDX-ACB domain maps to 716-808 (SQFPEAEIDL…LAGKNGFVLR (93 aa)).

This sequence belongs to the phenylalanyl-tRNA synthetase beta subunit family. Type 1 subfamily. As to quaternary structure, tetramer of two alpha and two beta subunits. Mg(2+) serves as cofactor.

Its subcellular location is the cytoplasm. The enzyme catalyses tRNA(Phe) + L-phenylalanine + ATP = L-phenylalanyl-tRNA(Phe) + AMP + diphosphate + H(+). This Leptospira interrogans serogroup Icterohaemorrhagiae serovar copenhageni (strain Fiocruz L1-130) protein is Phenylalanine--tRNA ligase beta subunit.